Reading from the N-terminus, the 236-residue chain is Endonuclease V (236 aa).

2 residues coordinate Mg(2+): aspartate 47 and aspartate 115.

Belongs to the endonuclease V family. Mg(2+) is required as a cofactor.

It is found in the cytoplasm. It carries out the reaction Endonucleolytic cleavage at apurinic or apyrimidinic sites to products with a 5'-phosphate.. Functionally, DNA repair enzyme involved in the repair of deaminated bases. Selectively cleaves double-stranded DNA at the second phosphodiester bond 3' to a deoxyinosine leaving behind the intact lesion on the nicked DNA. The sequence is that of Endonuclease V from Xanthomonas campestris pv. campestris (strain B100).